Here is a 1108-residue protein sequence, read N- to C-terminus: Topless-related protein 3 (1108 aa).

The 33-residue stretch at 4-36 folds into the LisH domain; that stretch reads LSRELVFLILQFLEEEKFKESVHRLEKESGFFF. In terms of domain architecture, CTLH spans 34–92; that stretch reads FFFNTKYFDEKVLAGEWDDVETYLSGFTKVDDNRYSMKIFFEIRKQKYLEALDRQEKAK. Serine 214 carries the phosphoserine modification. 6 WD repeats span residues 343–383, 405–444, 450–491, 493–534, 583–623, and 628–667; these read HQGS…RLVS, ETPISVTRVAWSPDGNFIGVAFTKHLIQLYAFSGPNDLRQ, AHVG…HFTF, GHDA…SRVD, EFQK…VLTS, and GGLPALPHLRFNKDGNLLAVTTADNGFKILANPAGFRSLR. The segment at 706–725 is disordered; that stretch reads HSQMLNGVDPSKSRIDDSTD. Positions 716 to 725 are enriched in basic and acidic residues; that stretch reads SKSRIDDSTD. WD repeat units follow at residues 751-790, 818-856, 859-899, 902-941, and 994-1033; these read GSSTKVVQLLYTNSGAGILALGSNGIQRLWKWVPNEQNPS, NLENAAPCIALSKNDSYVMSAAGGKVSLFNMMTFKVMTT, PPPP…VKSK, GHQKRITGLAFSTALNILVSSGADAQICFWSIDTWEKRKS, and SLSAPISSAVYACNSQLIYTTFRDGNIGVFDADSLRLRCR. Positions 1084-1108 are disordered; sequence GMIPPSEAINSPSTTSNQTPEQLQR. Polar residues predominate over residues 1091-1108; that stretch reads AINSPSTTSNQTPEQLQR.

Tetramer. Interacts with NINJA/AFPH2. Interacts with SMXL6. Interacts with SPL (via EAR motif). Interacts with SPEAR3/TIE1.

It localises to the nucleus. Its function is as follows. Transcriptional corepressor. Negative regulator of jasmonate responses. The protein is Topless-related protein 3 (TPR3) of Arabidopsis thaliana (Mouse-ear cress).